The sequence spans 284 residues: Bifunctional protein FolD (284 aa).

NADP(+) is bound by residues 165-167, Ser190, and Ile231; that span reads GRS.

It belongs to the tetrahydrofolate dehydrogenase/cyclohydrolase family. As to quaternary structure, homodimer.

The catalysed reaction is (6R)-5,10-methylene-5,6,7,8-tetrahydrofolate + NADP(+) = (6R)-5,10-methenyltetrahydrofolate + NADPH. The enzyme catalyses (6R)-5,10-methenyltetrahydrofolate + H2O = (6R)-10-formyltetrahydrofolate + H(+). It participates in one-carbon metabolism; tetrahydrofolate interconversion. In terms of biological role, catalyzes the oxidation of 5,10-methylenetetrahydrofolate to 5,10-methenyltetrahydrofolate and then the hydrolysis of 5,10-methenyltetrahydrofolate to 10-formyltetrahydrofolate. The polypeptide is Bifunctional protein FolD (Streptococcus thermophilus (strain ATCC BAA-250 / LMG 18311)).